A 416-amino-acid polypeptide reads, in one-letter code: Orexin/Hypocretin receptor type 1 (416 aa).

Residues 1–22 are disordered; the sequence is MEPSATPGAQPGVPTSSGEPFH. Topologically, residues 1–46 are extracellular; that stretch reads MEPSATPGAQPGVPTSSGEPFHLPPDYEDEFLRYLWRDYLYPKQYE. Positions 26–41 are required for response to orexin-A; it reads DYEDEFLRYLWRDYLY. A helical transmembrane segment spans residues 47–67; the sequence is WVLIAAYVAVFLIALVGNTLV. At 68-82 the chain is on the cytoplasmic side; the sequence is CLAVWRNHHMRTVTN. The helical transmembrane segment at 83–105 threads the bilayer; sequence YFIVNLSLADVLVTAICLPASLL. The Extracellular portion of the chain corresponds to 106–119; the sequence is VDITESWLFGQALC. C119 and C202 form a disulfide bridge. A helical transmembrane segment spans residues 120-140; that stretch reads KVIPYLQAVSVSVAVLTLSFI. Residues 141–160 are Cytoplasmic-facing; the sequence is ALDRWYAICHPLLFKSTARR. Residues 161–182 traverse the membrane as a helical segment; it reads ARGSILGIWAVSLAVMVPQAAV. At 183-213 the chain is on the extracellular side; sequence MECSSVLPELANRTRLFSVCDEHWADELYPK. N-linked (GlcNAc...) asparagine glycosylation occurs at N194. Residues 214 to 235 form a helical membrane-spanning segment; the sequence is IYHSCFFIVTYLAPLGLMAMAY. At 236–298 the chain is on the cytoplasmic side; sequence FQIFRKLWGR…QMRARRKTAK (63 aa). The chain crosses the membrane as a helical span at residues 299-321; that stretch reads MLMVVLLVFALCYLPISVLNVLK. Residues 322–336 are Extracellular-facing; the sequence is RVFGMFRQASDREAV. The chain crosses the membrane as a helical span at residues 337-360; it reads YACFTFSHWLVYANSAANPIIYNF. The Cytoplasmic portion of the chain corresponds to 361 to 416; that stretch reads LSGKFREQFKAAFSCCLPGLGPGSSARHKSLSLQSRCSVSKVSEHVVLTTVTTVLS.

The protein belongs to the G-protein coupled receptor 1 family. Widely expressed.

The protein resides in the cell membrane. Moderately selective excitatory receptor for orexin-A and, with a lower affinity, for orexin-B neuropeptide. Triggers an increase in cytoplasmic Ca(2+) levels in response to orexin-A binding. The protein is Orexin/Hypocretin receptor type 1 of Mus musculus (Mouse).